Consider the following 113-residue polypeptide: Large ribosomal subunit protein bL17 (113 aa).

Belongs to the bacterial ribosomal protein bL17 family. Part of the 50S ribosomal subunit. Contacts protein L32.

The protein is Large ribosomal subunit protein bL17 of Clostridium botulinum (strain Alaska E43 / Type E3).